The chain runs to 1883 residues: MSQVPVASPASWSSVASAAAAAVSAATSASSSLAASVDEPAATTATAATASYADERNPLIALFDGLLRVVLASLNLIRILATFSTITVPSLVYAILHYSLTLQLNFPSLALLFLTSLISAFIWLRYRHLNKYERLREVPITRDEGFNLNPDVASPGGDNDRGSFHNYLDDFLQAIRIFGFLEKPVFHELARHLQTRRLVAGDSLSLDTDFSFYIVIDGHVQVYAPLPSATASAVGQDSVEDEDDSGYQLLNEVESGGTLSSLFTILSLFTEDVKLSFDDHDDPHLAPPHPAYPAMDRLNNSSAANHLGRGNNATAPTSPYSSAFNPPSQTAAQLQLNAAALRNVPAAISTEGAVERLGGSAAVRSTSKSSHARTASSGTASATVQDGDTSTIMDPLEQNDDGVTSSLYHAPDLQMPPAQAAAPFSHFAPSYHPSPAGTPISSLPGSTHSPYFRGRATSIHALHEAAGGPNTPGSILSAMSSSAHGHYHPQADYLPRQGAGTVARATVDTTLAVIPAEAFKRLTKKFPNAAAHIVQVILARLSRVTFHTAHKYLGLTKEVMRTEKSINDLACFPLPSEFYEKGGMDKLRHRFLPQPNSKRETTVDDDYFRDFQEWTSISQRSSTPVPGSKDDTKDAATSSPPKVRIASDLPSLTTSSKQSNQKPTSSRISAARTPWGHPDPPLKTPTARNMVGPGDLLSMASLSQDGWYTTGFDMHSAQPTPRAKPRSVSKLEPFHGPLPHPVDDSTDGTSPLSGASPIPIRKGSSTMYHQGEAIGTDRPFANIGLPHFDIKNEVMDCIAKSIGLAQAAHSPLAPSYQASPHINAQDSLLQRSVFKSAFGSLSMLDAAMAEEESSITGTNSSMAGHGHSGFHPSDFENEVEIKFFPAGSTLVKAGESRAGLFYVIDGFLDVLLPAEANELEEEDRLKPNMNHKSAKTDASSGSSRQNRPGSHRKDSSSASLRAGLLDERNLREADVSLPQRRGTEADRISSNGDGNSGSVHRPAMREGSSSSTSYGTPAGLRKKPTESAKVGNALDGTGGAGSSSRRKPSHVSSGSGATTMPRHPDATNSNMAFTAKQPVLHPSLHQQQPLRGKPSQQSSQRSKDGKRSIFTVGRGGIAGYLSSLLGTASYVDITAKTDVYVGFLPAHALERIMERRPIVLLTLCKRLLSLLPPLILHIDSSLDWQQVNAGQVIYREDDPSDSFFIVINGRLRAITEKTNGIEVHNEYGQGDSVGELDVITNSRRRTTLHAIRDSELAKMPSTLFNAISVRHPAITIQISRIIARRVRTELVRSKQEGAALGAPIPGLPDLGRNNLNLKTVAIVPVTRQVPVIDFAAKLQTAFDDTIGGRAIFLDQSSVMGVLGRHAFSRMGKLKLAGWLADLEQKYRLVVYVVDTPVSSAWSQTSIRQADCVLMVGFGDEPAMGEYERLLMSVKTTARKELVLLHPERSVPPGSTREWLKNRPWVHAHHHVEMPGLTGSHAGAAISTGGDPKAVKALRNLKQKLETSLQRYRKTMTPLSASGRPHHASDFARLARRLCGMSIGLVLGGGGARGCAHLGVIRALEERGIPIDMVGGTSIGSLVGGLYAREAEMVSTFGRAKRFAGRMASLWRFASDLTYPVVSYTTGHEFNRGVFKAIQETHIEDMWIPFFCNTTNITWSRMEVHTSGYAWRYIRGSMTLAGLIPPLVDEGNMLVDGGYVDNLPVTVMLAMGARSVFAVDVGSIDDTSPRAYGDTLSGWWVLLNRWNPWSDASKIPSIPDIQGRLTYVSSVKTLEEAKKVKGCFYMRMPVEEFGTLAFGRFDMIYEKGYKAAVELLDGWDAEGKLPSGTEREDFEDDWEDGDEYEEYEVYTDDESGVGGGVRKIRKKRRRTRRKAGISARRNSI.

Residues 1–75 (MSQVPVASPA…LLRVVLASLN (75 aa)) are Cytoplasmic-facing. A helical transmembrane segment spans residues 76 to 96 (LIRILATFSTITVPSLVYAIL). Over 97–103 (HYSLTLQ) the chain is Lumenal. Residues 104 to 124 (LNFPSLALLFLTSLISAFIWL) form a helical membrane-spanning segment. Residues 125–1883 (RYRHLNKYER…AGISARRNSI (1759 aa)) are Cytoplasmic-facing. Disordered stretches follow at residues 284-327 (HLAP…FNPP), 355-410 (ERLG…LYHA), 618-693 (SQRS…MVGP), 716-764 (SAQP…RKGS), 921-1069 (EEDR…ATNS), and 1084-1108 (LHQQ…GKRS). The span at 311 to 327 (NNATAPTSPYSSAFNPP) shows a compositional bias: polar residues. Residues 372 to 383 (ARTASSGTASAT) are compositionally biased toward low complexity. The segment covering 650 to 668 (PSLTTSSKQSNQKPTSSRI) has biased composition (polar residues). Residues 863-1158 (AGHG…RRPI) and 1166-1285 (RLLS…IARR) contribute to the a nucleoside 3',5'-cyclic phosphate site. The span at 936-948 (TDASSGSSRQNRP) shows a compositional bias: polar residues. Positions 964–974 (LLDERNLREAD) are enriched in basic and acidic residues. Polar residues-rich tracts occupy residues 988–998 (ISSNGDGNSGS) and 1084–1100 (LHQQ…QSSQ). In terms of domain architecture, PNPLA spans 1544–1708 (LVLGGGGARG…VDNLPVTVML (165 aa)). Positions 1548–1553 (GGGARG) match the GXGXXG motif. A GXSXG motif is present at residues 1575 to 1579 (GTSIG). The active-site Nucleophile is Ser1577. Asp1695 (proton acceptor) is an active-site residue. Positions 1695 to 1697 (DGG) match the DGA/G motif. Positions 1852-1883 (DESGVGGGVRKIRKKRRRTRRKAGISARRNSI) are disordered. The segment covering 1861–1874 (RKIRKKRRRTRRKA) has biased composition (basic residues).

It belongs to the NTE family.

The protein resides in the endoplasmic reticulum membrane. The enzyme catalyses a 1-acyl-sn-glycero-3-phosphocholine + H2O = sn-glycerol 3-phosphocholine + a fatty acid + H(+). Its activity is regulated as follows. Inhibited by organophosphorus esters. Functionally, intracellular phospholipase B that catalyzes the double deacylation of phosphatidylcholine (PC) to glycerophosphocholine (GroPCho). Plays an important role in membrane lipid homeostasis. Responsible for the rapid PC turnover in response to inositol, elevated temperatures, or when choline is present in the growth medium. This chain is Lysophospholipase NTE1 (NTE1), found in Mycosarcoma maydis (Corn smut fungus).